The sequence spans 449 residues: UNC93-like protein MFSD11 (449 aa).

The chain crosses the membrane as a helical span at residues 8–28 (LFNIIILGVAFMFMFTAFQTC). N40 carries N-linked (GlcNAc...) asparagine glycosylation. A run of 5 helical transmembrane segments spans residues 53 to 73 (AIIY…VAIV), 74 to 94 (GPQL…AVFI), 96 to 116 (PFPW…AVLW), 138 to 158 (IFWA…YFAW), and 170 to 190 (RTVF…FFLI). At S204 the chain carries Phosphoserine. 6 helical membrane passes run 239–259 (MLLL…FSGV), 277–297 (LIGL…SLFG), 309–329 (PVVL…FLNM), 359–379 (FLLG…LGFL), 385–405 (APAF…AFFY), and 410–430 (LLHW…ISFF).

This sequence belongs to the unc-93 family.

The protein resides in the membrane. The sequence is that of UNC93-like protein MFSD11 (MFSD11) from Macaca fascicularis (Crab-eating macaque).